A 556-amino-acid chain; its full sequence is Serine/threonine-protein kinase PksC (556 aa).

Residues 20–287 (YQLRDLLGEG…SAEAMRDECL (268 aa)) enclose the Protein kinase domain. ATP contacts are provided by residues 26–34 (LGEGGMASV) and Lys-49. Catalysis depends on Asp-151, which acts as the Proton acceptor. 2 disordered regions span residues 300-403 (IVPG…PGGK) and 435-485 (EDPE…DPDK). Residues 336 to 348 (QPTPSPGPNPYGT) show a composition bias toward pro residues. Low complexity-rich tracts occupy residues 360-381 (YPQQ…QAAA) and 445-458 (STAS…KAAG). Over residues 461–475 (GPDKEKTIEKDKCTE) the composition is skewed to basic and acidic residues. Residues 482 to 550 (DPDKIQVPDF…MPEIQLKVST (69 aa)) enclose the PASTA domain.

Belongs to the protein kinase superfamily. Ser/Thr protein kinase family.

The catalysed reaction is L-seryl-[protein] + ATP = O-phospho-L-seryl-[protein] + ADP + H(+). It carries out the reaction L-threonyl-[protein] + ATP = O-phospho-L-threonyl-[protein] + ADP + H(+). The sequence is that of Serine/threonine-protein kinase PksC (pksC) from Streptomyces coelicolor (strain ATCC BAA-471 / A3(2) / M145).